Reading from the N-terminus, the 51-residue chain is Large ribosomal subunit protein eL39 (51 aa).

Belongs to the eukaryotic ribosomal protein eL39 family.

This chain is Large ribosomal subunit protein eL39 (rpl39e), found in Aeropyrum pernix (strain ATCC 700893 / DSM 11879 / JCM 9820 / NBRC 100138 / K1).